We begin with the raw amino-acid sequence, 256 residues long: Thrombin-like enzyme cerastocytin (256 aa).

The first 18 residues, M1–A18, serve as a signal peptide directing secretion. The propeptide occupies Q19–L24. Residues V25–A247 form the Peptidase S1 domain. 5 cysteine pairs are disulfide-bonded: C31–C161, C98–C254, C140–C208, C172–C187, and C198–C223. N-linked (GlcNAc...) asparagine glycosylation is present at N44. Catalysis depends on charge relay system residues H65 and D108. 3 N-linked (GlcNAc...) asparagine glycosylation sites follow: N119, N120, and N152. The Charge relay system role is filled by S202.

Belongs to the peptidase S1 family. Snake venom subfamily. Monomer. As to expression, expressed by the venom gland.

Its subcellular location is the secreted. With respect to regulation, its platelets aggregating activity is inhibited by chlorpromazine, theophylline mepacrine. Its platelet aggregating activity and its amidolytic activity are inhibited by PMSF, TPCK, TLCK and soybean trypsin inhibitors. Is unaffected by hirudin or by antithrombin-III in the presence of heparin. Its function is as follows. Thrombin-like snake venom serine protease which potently induces platelet aggregation and has fibrinogenolytic activities. Clots purified fibrinogen and hydrolyzes alpha-chains (FGA). High concentrations of this enzyme also cleave prothrombin (F2) and factor X (F10). Is also able to activate factor XIII (F8). The protein is Thrombin-like enzyme cerastocytin of Cerastes cerastes (Horned desert viper).